The following is a 344-amino-acid chain: Putative glycosyltransferase EpsH (344 aa).

This sequence belongs to the glycosyltransferase 2 family.

Functionally, may be involved in the production of the exopolysaccharide (EPS) component of the extracellular matrix during biofilm formation. EPS is responsible for the adhesion of chains of cells into bundles. Required for biofilm maintenance. The protein is Putative glycosyltransferase EpsH (epsH) of Bacillus subtilis (strain 168).